We begin with the raw amino-acid sequence, 361 residues long: Phosphoserine aminotransferase (361 aa).

Residue arginine 43 coordinates L-glutamate. Residues 77 to 78 (AS), tryptophan 103, threonine 153, aspartate 173, and glutamine 196 each bind pyridoxal 5'-phosphate. At lysine 197 the chain carries N6-(pyridoxal phosphate)lysine. Position 238–239 (238–239 (NT)) interacts with pyridoxal 5'-phosphate.

It belongs to the class-V pyridoxal-phosphate-dependent aminotransferase family. SerC subfamily. As to quaternary structure, homodimer. Pyridoxal 5'-phosphate serves as cofactor.

It localises to the cytoplasm. The catalysed reaction is O-phospho-L-serine + 2-oxoglutarate = 3-phosphooxypyruvate + L-glutamate. It catalyses the reaction 4-(phosphooxy)-L-threonine + 2-oxoglutarate = (R)-3-hydroxy-2-oxo-4-phosphooxybutanoate + L-glutamate. It functions in the pathway amino-acid biosynthesis; L-serine biosynthesis; L-serine from 3-phospho-D-glycerate: step 2/3. Its pathway is cofactor biosynthesis; pyridoxine 5'-phosphate biosynthesis; pyridoxine 5'-phosphate from D-erythrose 4-phosphate: step 3/5. Functionally, catalyzes the reversible conversion of 3-phosphohydroxypyruvate to phosphoserine and of 3-hydroxy-2-oxo-4-phosphonooxybutanoate to phosphohydroxythreonine. The sequence is that of Phosphoserine aminotransferase from Azotobacter vinelandii (strain DJ / ATCC BAA-1303).